A 763-amino-acid polypeptide reads, in one-letter code: Probable ubiquitin carboxyl-terminal hydrolase MINDY-4 (763 aa).

At serine 143 the chain carries Phosphoserine. The segment at 154–368 (SSKRSSHKSR…SQPASLRKNQ (215 aa)) is disordered. A compositionally biased stretch (basic and acidic residues) spans 180–202 (EKTDKLPMSEPSLDTKRMGEKVR). Serine 220 and serine 224 each carry phosphoserine. Positions 252 to 261 (ELSTHTSTCP) are enriched in polar residues. Residues 267–278 (PASSTASTSRSP) show a composition bias toward low complexity. Position 296 is a phosphoserine (serine 296). The span at 346–355 (TQERPERAFE) shows a compositional bias: basic and acidic residues. The span at 357-368 (QGSQPASLRKNQ) shows a compositional bias: polar residues. The Nucleophile role is filled by cysteine 463. Histidine 683 (proton acceptor) is an active-site residue.

The protein belongs to the MINDY deubiquitinase family. FAM188 subfamily.

It catalyses the reaction Thiol-dependent hydrolysis of ester, thioester, amide, peptide and isopeptide bonds formed by the C-terminal Gly of ubiquitin (a 76-residue protein attached to proteins as an intracellular targeting signal).. Probable hydrolase that can remove 'Lys-48'-linked conjugated ubiquitin from proteins. The polypeptide is Probable ubiquitin carboxyl-terminal hydrolase MINDY-4 (MINDY4) (Bos taurus (Bovine)).